Reading from the N-terminus, the 288-residue chain is Probable aquaporin PIP1-2 (288 aa).

Positions 1–37 are disordered; the sequence is MEGKEEDVRLGANKFSERQPIGTAAQGSDDKDYKEPP. Transmembrane regions (helical) follow at residues 57-77 and 92-114; these read IAEF…VMGV and IAWS…SGGH. The NPA 1 signature appears at 116-118; it reads NPA. 3 consecutive transmembrane segments (helical) span residues 135–155, 177–197, and 211–231; these read LFYM…VKGF, GDGL…VFSA, and ILAP…TIPI. Residues 237–239 carry the NPA 2 motif; that stretch reads NPA. Residues 259–279 traverse the membrane as a helical segment; the sequence is IFWVGPFIGAALAAIYHQVVI.

This sequence belongs to the MIP/aquaporin (TC 1.A.8) family. PIP (TC 1.A.8.11) subfamily. As to expression, expressed in roots, leaves and anthers.

The protein resides in the cell membrane. Its function is as follows. Aquaporins facilitate the transport of water and small neutral solutes across cell membranes. The chain is Probable aquaporin PIP1-2 (PIP1-2) from Oryza sativa subsp. japonica (Rice).